Reading from the N-terminus, the 229-residue chain is Large ribosomal subunit protein uL1 (229 aa).

This sequence belongs to the universal ribosomal protein uL1 family. In terms of assembly, part of the 50S ribosomal subunit.

Its function is as follows. Binds directly to 23S rRNA. The L1 stalk is quite mobile in the ribosome, and is involved in E site tRNA release. Functionally, protein L1 is also a translational repressor protein, it controls the translation of the L11 operon by binding to its mRNA. The polypeptide is Large ribosomal subunit protein uL1 (Clostridium botulinum (strain Alaska E43 / Type E3)).